A 187-amino-acid chain; its full sequence is Cytokinin riboside 5'-monophosphate phosphoribohydrolase (187 aa).

An Isoglutamyl lysine isopeptide (Lys-Gln) (interchain with Q-Cter in protein Pup) cross-link involves residue K74. Residues E80, 98-99 (RK), 115-121 (GVGTLDE), and T127 each bind substrate.

It belongs to the LOG family. In terms of assembly, homodimer. In terms of processing, pupylated at Lys-74 by the prokaryotic ubiquitin-like protein Pup, which leads to its degradation by the proteasome. The proteasomal control of cytokinin synthesis is essential to protect M.tuberculosis against host-produced NO.

The catalysed reaction is N(6)-(dimethylallyl)adenosine 5'-phosphate + H2O = N(6)-dimethylallyladenine + D-ribose 5-phosphate. It catalyses the reaction 9-ribosyl-trans-zeatin 5'-phosphate + H2O = trans-zeatin + D-ribose 5-phosphate. In terms of biological role, catalyzes the hydrolytic removal of ribose 5'-monophosphate from nitrogen N6-modified adenosines, the final step of bioactive cytokinin synthesis. Is involved in the synthesis of isopentenyladenine (iP) and 2-methylthio-iP (2MeS-iP), the most abundant cytokinins detected in M.tuberculosis lysates and supernatants. Is also able to convert trans-zeatin-riboside monophosphate (tZRMP) to trans-zeatin (tZ) in vitro; however, it may not be involved in the biosynthesis of this minor cytokinin in vivo. Accumulation of Rv1205 sensitizes M.tuberculosis to nitric oxide since cytokinin breakdown products synergize with NO to kill M.tuberculosis. Shows a slow AMP hydrolase activity, but is not able to hydrolyze ATP. Displays no lysine decarboxylase (LDC) activity (L-lysine conversion to cadaverine). The polypeptide is Cytokinin riboside 5'-monophosphate phosphoribohydrolase (Mycobacterium tuberculosis (strain ATCC 25618 / H37Rv)).